Here is a 98-residue protein sequence, read N- to C-terminus: Pancreatic polypeptide prohormone (98 aa).

Positions 1 to 29 (MAVAYYCLSLFLLSTWVALLLQPLQGAWG) are cleaved as a signal peptide. Tyrosine 65 carries the post-translational modification Tyrosine amide.

It belongs to the NPY family. In terms of processing, no icosapeptide-like peptide is cleaved from the C-terminal.

The protein localises to the secreted. Functionally, hormone secreted by pancreatic cells that acts as a regulator of pancreatic and gastrointestinal functions probably by signaling through the G protein-coupled receptor NPY4R2. The polypeptide is Pancreatic polypeptide prohormone (Ppy) (Rattus norvegicus (Rat)).